The following is an 88-amino-acid chain: Small ribosomal subunit protein bS16c (88 aa).

This sequence belongs to the bacterial ribosomal protein bS16 family.

It localises to the plastid. It is found in the chloroplast. This is Small ribosomal subunit protein bS16c from Helianthus annuus (Common sunflower).